A 174-amino-acid chain; its full sequence is Glycine-rich protein 5 (174 aa).

A signal peptide spans 1 to 22; the sequence is MASKSLFLVALLVGSFAFTSFA.

In terms of tissue distribution, mostly expressed in immature seed pods, and, to a lower extent, in stems and leaves. Present in phloem and epiderm in leaves, stems, flowers and fruits.

The protein localises to the vacuole. Functionally, involved in organ growth by promoting cell elongation processes. The protein is Glycine-rich protein 5 of Arabidopsis thaliana (Mouse-ear cress).